Reading from the N-terminus, the 546-residue chain is Zinc metalloproteinase nas-9 (546 aa).

An N-terminal signal peptide occupies residues 1-14 (MIFLLFVVFPFVYA). Positions 15 to 300 (QLLPELLAGF…GGGGGGRVPR (286 aa)) are excised as a propeptide. N-linked (GlcNAc...) asparagine glycosylation occurs at asparagine 248. A Peptidase M12A domain is found at 308 to 507 (SAVQKWDIWK…IRLLKKMYCR (200 aa)). 5 cysteine pairs are disulfide-bonded: cysteine 347-cysteine 506, cysteine 372-cysteine 392, cysteine 510-cysteine 546, cysteine 517-cysteine 539, and cysteine 526-cysteine 543. Histidine 401 is a binding site for Zn(2+). Residue glutamate 402 is part of the active site. Positions 405 and 411 each coordinate Zn(2+). Residues 510-546 (CDDQNVHCGTWALHGYCKMKEQMKWMNENCKASCDKC) form the ShKT domain.

Zn(2+) serves as cofactor. Expressed in hypodermis, uterus and spermatheca.

It localises to the secreted. Functionally, metalloprotease. In Caenorhabditis elegans, this protein is Zinc metalloproteinase nas-9 (nas-9).